Reading from the N-terminus, the 268-residue chain is 4-hydroxy-tetrahydrodipicolinate reductase (268 aa).

NAD(+) is bound by residues 8-13 (GGGGKM) and Glu34. Lys35 contributes to the NADP(+) binding site. Residues 98-100 (GST) and 122-125 (APNM) contribute to the NAD(+) site. His155 serves as the catalytic Proton donor/acceptor. His156 contacts (S)-2,3,4,5-tetrahydrodipicolinate. Lys159 acts as the Proton donor in catalysis. 165–166 (GT) lines the (S)-2,3,4,5-tetrahydrodipicolinate pocket.

Belongs to the DapB family.

The protein localises to the cytoplasm. It carries out the reaction (S)-2,3,4,5-tetrahydrodipicolinate + NAD(+) + H2O = (2S,4S)-4-hydroxy-2,3,4,5-tetrahydrodipicolinate + NADH + H(+). The catalysed reaction is (S)-2,3,4,5-tetrahydrodipicolinate + NADP(+) + H2O = (2S,4S)-4-hydroxy-2,3,4,5-tetrahydrodipicolinate + NADPH + H(+). The protein operates within amino-acid biosynthesis; L-lysine biosynthesis via DAP pathway; (S)-tetrahydrodipicolinate from L-aspartate: step 4/4. In terms of biological role, catalyzes the conversion of 4-hydroxy-tetrahydrodipicolinate (HTPA) to tetrahydrodipicolinate. The protein is 4-hydroxy-tetrahydrodipicolinate reductase of Syntrophus aciditrophicus (strain SB).